The sequence spans 379 residues: Cytokine receptor common subunit gamma (379 aa).

A signal peptide spans 1 to 22 (MLKPPLPLRSLLFLQLPLLGVG). The Extracellular segment spans residues 23–269 (LNPKFLTPSG…ENIENPENPS (247 aa)). An intrachain disulfide couples Cys68 to Cys78. N-linked (GlcNAc...) asparagine glycosylation is found at Asn77, Asn81, and Asn90. Cys109 and Cys122 are oxidised to a cystine. A Fibronectin type-III domain is found at 163-260 (APENLTLRNL…IHWGSNTSKE (98 aa)). Residues Asn166 and Asn171 are each glycosylated (N-linked (GlcNAc...) asparagine). Positions 244–248 (WSDWS) match the WSXWS motif motif. The helical transmembrane segment at 270–290 (LFALEAVLIPLGSMGLIVSLI) threads the bilayer. Over 291-379 (CVYCWLERTM…PPCYTLKPEP (89 aa)) the chain is Cytoplasmic. A Box 1 motif motif is present at residues 299-307 (TMPRIPTLK). Residue Thr305 is modified to Phosphothreonine. A disordered region spans residues 349-370 (PPKGGEGPGGSPCSQHSPYWAP).

Belongs to the type I cytokine receptor family. Type 5 subfamily. In terms of assembly, the gamma subunit is common to the IL2, IL4, IL7, IL15, IL21 and probably also the IL13 receptors. Interacts with SHB upon interleukin stimulation.

Its subcellular location is the cell membrane. The protein resides in the cell surface. Its function is as follows. Common subunit for the receptors for a variety of interleukins. Probably in association with IL15RA, involved in the stimulation of neutrophil phagocytosis by IL15. In Bos taurus (Bovine), this protein is Cytokine receptor common subunit gamma (IL2RG).